Consider the following 165-residue polypeptide: Ribonuclease H2 subunit C (165 aa).

Residue Met1 is modified to N-acetylmethionine.

Belongs to the RNase H2 subunit C family. In terms of assembly, the RNase H2 complex is a heterotrimer composed of the catalytic subunit RNASEH2A and the non-catalytic subunits RNASEH2B and RNASEH2C.

It is found in the nucleus. In terms of biological role, non catalytic subunit of RNase H2, an endonuclease that specifically degrades the RNA of RNA:DNA hybrids. Participates in DNA replication, possibly by mediating the removal of lagging-strand Okazaki fragment RNA primers during DNA replication. Mediates the excision of single ribonucleotides from DNA:RNA duplexes. This chain is Ribonuclease H2 subunit C (RNASEH2C), found in Bos taurus (Bovine).